We begin with the raw amino-acid sequence, 389 residues long: Equilibrative nucleotide transporter 8 (389 aa).

Transmembrane regions (helical) follow at residues 19–39 (VAYVIHFLLGAGSLIPWNALI), 57–77 (TFTVAYMSCSVLVLVLMMTWN), 87–107 (NLGFSMFIIAMMISPLIDWVW), 119–139 (LMVGSVVLCGLADGVVGGSLI), 150–170 (MQAIFAGTASSGIIISLLRIA), 187–207 (HSYFIVSSTILLCCFISCNVL), 238–258 (WPASGMLIIYSVTLSIFPGFI), 266–286 (LLQSWYPILLITVYNISDFVG), 331–351 (VVVLTFMLGLTNGYLTSVLMI), and 367–387 (IFMVVFLGLGLVCGSVIGWLW).

The protein belongs to the SLC29A/ENT transporter (TC 2.A.57) family. As to expression, expressed in stems, flowers and siliques.

The protein resides in the cell membrane. Functionally, may be involved in nucleoside transport. The chain is Equilibrative nucleotide transporter 8 (ETN8) from Arabidopsis thaliana (Mouse-ear cress).